Here is a 251-residue protein sequence, read N- to C-terminus: 5'-nucleotidase SurE (251 aa).

Positions 8, 9, 40, and 95 each coordinate a divalent metal cation.

This sequence belongs to the SurE nucleotidase family. Requires a divalent metal cation as cofactor.

The protein localises to the cytoplasm. The catalysed reaction is a ribonucleoside 5'-phosphate + H2O = a ribonucleoside + phosphate. In terms of biological role, nucleotidase that shows phosphatase activity on nucleoside 5'-monophosphates. The polypeptide is 5'-nucleotidase SurE (Lawsonia intracellularis (strain PHE/MN1-00)).